Reading from the N-terminus, the 322-residue chain is UPF0324 membrane protein BB4178 (322 aa).

A run of 10 helical transmembrane segments spans residues 13–35, 50–69, 76–98, 108–127, 139–161, 171–193, 209–231, 241–260, 273–292, and 296–318; these read FIRQ…YGNF, FTAR…NISI, GLPG…TVAG, TAML…VLAF, AVAV…VIYH, ALGI…ASNI, VALL…AAGA, VPWF…LDIL, VFVL…FAQI, and GPRV…YGIV.

This sequence belongs to the UPF0324 family.

The protein localises to the cell membrane. The sequence is that of UPF0324 membrane protein BB4178 from Bordetella bronchiseptica (strain ATCC BAA-588 / NCTC 13252 / RB50) (Alcaligenes bronchisepticus).